A 381-amino-acid chain; its full sequence is Erythronate-4-phosphate dehydrogenase (381 aa).

Substrate-binding residues include serine 45 and threonine 66. NAD(+) contacts are provided by residues aspartate 146, threonine 174, 205–207 (ASR), and aspartate 231. Residue arginine 207 is part of the active site. Glutamate 236 is a catalytic residue. The Proton donor role is filled by histidine 253. Glycine 256 provides a ligand contact to NAD(+). Position 257 (tyrosine 257) interacts with substrate.

The protein belongs to the D-isomer specific 2-hydroxyacid dehydrogenase family. PdxB subfamily. Homodimer.

It localises to the cytoplasm. It carries out the reaction 4-phospho-D-erythronate + NAD(+) = (R)-3-hydroxy-2-oxo-4-phosphooxybutanoate + NADH + H(+). The protein operates within cofactor biosynthesis; pyridoxine 5'-phosphate biosynthesis; pyridoxine 5'-phosphate from D-erythrose 4-phosphate: step 2/5. Catalyzes the oxidation of erythronate-4-phosphate to 3-hydroxy-2-oxo-4-phosphonooxybutanoate. In Stutzerimonas stutzeri (strain A1501) (Pseudomonas stutzeri), this protein is Erythronate-4-phosphate dehydrogenase.